The primary structure comprises 87 residues: Small ribosomal subunit protein uS15c (87 aa).

The protein belongs to the universal ribosomal protein uS15 family. Part of the 30S ribosomal subunit.

The protein resides in the plastid. Its subcellular location is the chloroplast. This Coffea arabica (Arabian coffee) protein is Small ribosomal subunit protein uS15c (rps15).